Reading from the N-terminus, the 584-residue chain is Pectinesterase 1 (584 aa).

Positions 1-42 (MTHIKEFFTKLSESSSNQNISNIPKKKKKLFLALFATLLVVA) are cleaved as a signal peptide. 3 N-linked (GlcNAc...) asparagine glycosylation sites follow: asparagine 108, asparagine 129, and asparagine 226. 2 residues coordinate substrate: threonine 348 and glutamine 378. Aspartate 401 (proton donor) is an active-site residue. A disulfide bond links cysteine 415 and cysteine 435. Aspartate 422 functions as the Nucleophile in the catalytic mechanism. Substrate-binding residues include arginine 490 and tryptophan 492.

It in the N-terminal section; belongs to the PMEI family. This sequence in the C-terminal section; belongs to the pectinesterase family. As to expression, expressed at high levels in flower buds, shoots and young leaves, and at lower levels in young fruit, young bark and juice vesicles. Not expressed at significant levels in leaf abscission zones following ethylene treatment or in mature leaves. In fruit abscission zones, expression was initially undetectable but increased markedly following ethylene treatment.

The protein localises to the secreted. The protein resides in the cell wall. The catalysed reaction is [(1-&gt;4)-alpha-D-galacturonosyl methyl ester](n) + n H2O = [(1-&gt;4)-alpha-D-galacturonosyl](n) + n methanol + n H(+). The protein operates within glycan metabolism; pectin degradation; 2-dehydro-3-deoxy-D-gluconate from pectin: step 1/5. Its function is as follows. Acts in the modification of cell walls via demethylesterification of cell wall pectin. The polypeptide is Pectinesterase 1 (PECS-1.1) (Citrus sinensis (Sweet orange)).